A 325-amino-acid chain; its full sequence is Glutarate 2-hydroxylase (325 aa).

Fe cation-binding residues include histidine 160, aspartate 162, and histidine 292.

It belongs to the glutarate hydroxylase family. In terms of assembly, homotetramer. Fe(2+) serves as cofactor.

The enzyme catalyses glutarate + 2-oxoglutarate + O2 = (S)-2-hydroxyglutarate + succinate + CO2. Its pathway is amino-acid degradation. Functionally, acts as an alpha-ketoglutarate-dependent dioxygenase catalyzing hydroxylation of glutarate (GA) to L-2-hydroxyglutarate (L2HG). Functions in a L-lysine degradation pathway that proceeds via cadaverine, glutarate and L-2-hydroxyglutarate. This is Glutarate 2-hydroxylase from Pseudomonas putida (strain GB-1).